The primary structure comprises 20 residues: Cytochrome c oxidase subunit 6A1, mitochondrial (20 aa).

Belongs to the cytochrome c oxidase subunit 6A family. In terms of assembly, component of the cytochrome c oxidase (complex IV, CIV), a multisubunit enzyme composed of 14 subunits. The complex is composed of a catalytic core of 3 subunits MT-CO1, MT-CO2 and MT-CO3, encoded in the mitochondrial DNA, and 11 supernumerary subunits COX4I, COX5A, COX5B, COX6A, COX6B, COX6C, COX7A, COX7B, COX7C, COX8 and NDUFA4, which are encoded in the nuclear genome. The complex exists as a monomer or a dimer and forms supercomplexes (SCs) in the inner mitochondrial membrane with NADH-ubiquinone oxidoreductase (complex I, CI) and ubiquinol-cytochrome c oxidoreductase (cytochrome b-c1 complex, complex III, CIII), resulting in different assemblies (supercomplex SCI(1)III(2)IV(1) and megacomplex MCI(2)III(2)IV(2)). Liver specific isoform.

The protein localises to the mitochondrion inner membrane. Its pathway is energy metabolism; oxidative phosphorylation. Component of the cytochrome c oxidase, the last enzyme in the mitochondrial electron transport chain which drives oxidative phosphorylation. The respiratory chain contains 3 multisubunit complexes succinate dehydrogenase (complex II, CII), ubiquinol-cytochrome c oxidoreductase (cytochrome b-c1 complex, complex III, CIII) and cytochrome c oxidase (complex IV, CIV), that cooperate to transfer electrons derived from NADH and succinate to molecular oxygen, creating an electrochemical gradient over the inner membrane that drives transmembrane transport and the ATP synthase. Cytochrome c oxidase is the component of the respiratory chain that catalyzes the reduction of oxygen to water. Electrons originating from reduced cytochrome c in the intermembrane space (IMS) are transferred via the dinuclear copper A center (CU(A)) of subunit 2 and heme A of subunit 1 to the active site in subunit 1, a binuclear center (BNC) formed by heme A3 and copper B (CU(B)). The BNC reduces molecular oxygen to 2 water molecules unsing 4 electrons from cytochrome c in the IMS and 4 protons from the mitochondrial matrix. This is Cytochrome c oxidase subunit 6A1, mitochondrial (COX6A1) from Ovis aries (Sheep).